The sequence spans 156 residues: Small ribosomal subunit protein uS7 (156 aa).

This sequence belongs to the universal ribosomal protein uS7 family. Part of the 30S ribosomal subunit. Contacts proteins S9 and S11.

In terms of biological role, one of the primary rRNA binding proteins, it binds directly to 16S rRNA where it nucleates assembly of the head domain of the 30S subunit. Is located at the subunit interface close to the decoding center, probably blocks exit of the E-site tRNA. This Synechococcus sp. (strain JA-2-3B'a(2-13)) (Cyanobacteria bacterium Yellowstone B-Prime) protein is Small ribosomal subunit protein uS7.